The chain runs to 229 residues: PKHD-type hydroxylase RPD_3334 (229 aa).

Positions 78–180 (QIFPPLFNRY…RVASFFWLQS (103 aa)) constitute a Fe2OG dioxygenase domain. Fe cation is bound by residues His-98, Asp-100, and His-161. Arg-171 is a 2-oxoglutarate binding site.

Fe(2+) serves as cofactor. The cofactor is L-ascorbate.

The protein is PKHD-type hydroxylase RPD_3334 of Rhodopseudomonas palustris (strain BisB5).